Reading from the N-terminus, the 132-residue chain is MTLNLCVLTPNRIVWDSEVKEIILPTNSGQIGVLPNHAPIATAVDIGILRIRLNGQWLTMALMGGFAKIGSNEIIVLVNDAEKGSDIDPQEAQQTLEIAEANLKKAEGKRQTIEANLALRRARTRVEAINAV.

The protein belongs to the ATPase epsilon chain family. In terms of assembly, F-type ATPases have 2 components, CF(1) - the catalytic core - and CF(0) - the membrane proton channel. CF(1) has five subunits: alpha(3), beta(3), gamma(1), delta(1), epsilon(1). CF(0) has three main subunits: a, b and c.

Its subcellular location is the plastid. The protein resides in the chloroplast thylakoid membrane. Produces ATP from ADP in the presence of a proton gradient across the membrane. This Coffea arabica (Arabian coffee) protein is ATP synthase epsilon chain, chloroplastic.